Here is a 932-residue protein sequence, read N- to C-terminus: DNA mismatch repair protein MutS (932 aa).

Glycine 615–serine 622 lines the ATP pocket.

Belongs to the DNA mismatch repair MutS family.

This protein is involved in the repair of mismatches in DNA. It is possible that it carries out the mismatch recognition step. This protein has a weak ATPase activity. This is DNA mismatch repair protein MutS from Clostridium botulinum (strain Loch Maree / Type A3).